We begin with the raw amino-acid sequence, 264 residues long: MKQYHDLMQHILDQGVKKEDRTGTGTVSVFGYQMRFNLQEGFPLLTTKKLHMRSITHELLWFLQGDTNIKYLKDNNVSIWDEWADENGNLGPVYGYQWRSWPTPDGKHIDQITNVVNMIKNNPDSRRLIVSAWNVGEIEKMKLPPCHAFFQFYVADGKLSCQLYQRSADVFLGVPFNIASYALLTMMVAQVCGLQAGDFVHTLGDAHLYSNHLEQAKLQLSRDFRPLPAMKINPDVKSIFDFKFEDFTLEGYDPHPHIKAAVAV.

DUMP is bound at residue Arg21. (6R)-5,10-methylene-5,6,7,8-tetrahydrofolate is bound at residue His51. Residue 126–127 (RR) coordinates dUMP. The active-site Nucleophile is Cys146. Residues 166–169 (RSAD), Asn177, and 207–209 (HLY) contribute to the dUMP site. (6R)-5,10-methylene-5,6,7,8-tetrahydrofolate is bound at residue Asp169. Position 263 (Ala263) interacts with (6R)-5,10-methylene-5,6,7,8-tetrahydrofolate.

The protein belongs to the thymidylate synthase family. Bacterial-type ThyA subfamily. Homodimer.

It localises to the cytoplasm. It carries out the reaction dUMP + (6R)-5,10-methylene-5,6,7,8-tetrahydrofolate = 7,8-dihydrofolate + dTMP. It participates in pyrimidine metabolism; dTTP biosynthesis. Catalyzes the reductive methylation of 2'-deoxyuridine-5'-monophosphate (dUMP) to 2'-deoxythymidine-5'-monophosphate (dTMP) while utilizing 5,10-methylenetetrahydrofolate (mTHF) as the methyl donor and reductant in the reaction, yielding dihydrofolate (DHF) as a by-product. This enzymatic reaction provides an intracellular de novo source of dTMP, an essential precursor for DNA biosynthesis. This Cytophaga hutchinsonii (strain ATCC 33406 / DSM 1761 / CIP 103989 / NBRC 15051 / NCIMB 9469 / D465) protein is Thymidylate synthase.